Consider the following 332-residue polypeptide: Methionyl-tRNA formyltransferase (332 aa).

124-127 contacts (6S)-5,6,7,8-tetrahydrofolate; sequence SLLP.

It belongs to the Fmt family.

The catalysed reaction is L-methionyl-tRNA(fMet) + (6R)-10-formyltetrahydrofolate = N-formyl-L-methionyl-tRNA(fMet) + (6S)-5,6,7,8-tetrahydrofolate + H(+). In terms of biological role, attaches a formyl group to the free amino group of methionyl-tRNA(fMet). The formyl group appears to play a dual role in the initiator identity of N-formylmethionyl-tRNA by promoting its recognition by IF2 and preventing the misappropriation of this tRNA by the elongation apparatus. The sequence is that of Methionyl-tRNA formyltransferase from Polynucleobacter necessarius subsp. necessarius (strain STIR1).